Consider the following 688-residue polypeptide: DNA ligase (688 aa).

NAD(+) is bound by residues 42–46 (DAEYD), 91–92 (SL), and Glu128. The active-site N6-AMP-lysine intermediate is the Lys130. NAD(+) contacts are provided by Arg151, Glu188, Lys305, and Lys329. Zn(2+) contacts are provided by Cys423, Cys426, Cys441, and Cys447. One can recognise a BRCT domain in the interval 608 to 688 (APQGVLAGKT…GMRKLLEGQL (81 aa)).

The protein belongs to the NAD-dependent DNA ligase family. LigA subfamily. Requires Mg(2+) as cofactor. Mn(2+) serves as cofactor.

The enzyme catalyses NAD(+) + (deoxyribonucleotide)n-3'-hydroxyl + 5'-phospho-(deoxyribonucleotide)m = (deoxyribonucleotide)n+m + AMP + beta-nicotinamide D-nucleotide.. Its function is as follows. DNA ligase that catalyzes the formation of phosphodiester linkages between 5'-phosphoryl and 3'-hydroxyl groups in double-stranded DNA using NAD as a coenzyme and as the energy source for the reaction. It is essential for DNA replication and repair of damaged DNA. The chain is DNA ligase from Paraburkholderia phytofirmans (strain DSM 17436 / LMG 22146 / PsJN) (Burkholderia phytofirmans).